The primary structure comprises 485 residues: Glutamate--tRNA ligase (485 aa).

A 'HIGH' region motif is present at residues 10-20 (PSPTGHLHIGN). The 'KMSKS' region motif lies at 253 to 257 (KLSKR). K256 provides a ligand contact to ATP.

The protein belongs to the class-I aminoacyl-tRNA synthetase family. Glutamate--tRNA ligase type 1 subfamily. Monomer.

It localises to the cytoplasm. It catalyses the reaction tRNA(Glu) + L-glutamate + ATP = L-glutamyl-tRNA(Glu) + AMP + diphosphate. Its function is as follows. Catalyzes the attachment of glutamate to tRNA(Glu) in a two-step reaction: glutamate is first activated by ATP to form Glu-AMP and then transferred to the acceptor end of tRNA(Glu). In Enterococcus faecalis (strain ATCC 700802 / V583), this protein is Glutamate--tRNA ligase.